Reading from the N-terminus, the 427-residue chain is Glutamate-1-semialdehyde 2,1-aminomutase (427 aa).

Residue K268 is modified to N6-(pyridoxal phosphate)lysine.

Belongs to the class-III pyridoxal-phosphate-dependent aminotransferase family. HemL subfamily. Pyridoxal 5'-phosphate is required as a cofactor.

Its subcellular location is the cytoplasm. The enzyme catalyses (S)-4-amino-5-oxopentanoate = 5-aminolevulinate. It participates in porphyrin-containing compound metabolism; protoporphyrin-IX biosynthesis; 5-aminolevulinate from L-glutamyl-tRNA(Glu): step 2/2. The protein is Glutamate-1-semialdehyde 2,1-aminomutase of Methanococcus vannielii (strain ATCC 35089 / DSM 1224 / JCM 13029 / OCM 148 / SB).